A 326-amino-acid polypeptide reads, in one-letter code: MAVASLSICFSARPHLLLRNFSPRPKFVAMAAMSEDPIREWILTEGKATQITKIGSVGGGCINLASHYQTDAGSFFVKTNRSIGPAMFEGEALGLEAMYETRTIRVPNPHKAGELPTGGSYIIMEFIDFGGSRGNQAELGRKLAEMHKAGKTSKGFGFEVDNTIGSTPQINTWSSDWIEFYGEKRLGYQLKLARDQYGDSAIYQKGHTLIQNMAPLFENVVIEPCLLHGDLWSGNIAYDKNNEPVILDPACYYGHNEADFGMSWCAGFGESFYNAYFKVMPKQAGYEKRRDLYLLYHYLNHYNLFGSGYRSSAMSIIDDYLRMLKA.

A chloroplast-targeting transit peptide spans 1-30 (MAVASLSICFSARPHLLLRNFSPRPKFVAM). Position 125–127 (125–127 (EFI)) interacts with ATP. Aspartate 230 functions as the Proton acceptor in the catalytic mechanism.

Belongs to the fructosamine kinase family.

The protein resides in the plastid. The protein localises to the chloroplast. It carries out the reaction N(6)-D-ribulosyl-L-lysyl-[protein] + ATP = N(6)-(3-O-phospho-D-ribulosyl)-L-lysyl-[protein] + ADP + H(+). The enzyme catalyses N(6)-(D-erythrulosyl)-L-lysyl-[protein] + ATP = N(6)-(3-O-phospho-D-erythrulosyl)-L-lysyl-[protein] + ADP + H(+). Its function is as follows. Initiates a process leading to the deglycation of proteins. Phosphorylates low-molecular-mass and protein-bound erythrulosamines and ribulosamines, but not fructosamines or psicosamines, on the third carbon of the sugar moiety. Protein-bound erythrulosamine 3-phosphates and ribulosamine 3-phosphates are unstable and decompose under physiological conditions. This Arabidopsis thaliana (Mouse-ear cress) protein is Protein-ribulosamine 3-kinase, chloroplastic.